The following is a 335-amino-acid chain: DNA-directed RNA polymerase subunit alpha (335 aa).

The segment at 1–233 is alpha N-terminal domain (alpha-NTD); the sequence is MVREKITVST…DLFIPFLHME (233 aa). The alpha C-terminal domain (alpha-CTD) stretch occupies residues 265-335; it reads KEIALKSIFI…KQLVIFLPKK (71 aa).

It belongs to the RNA polymerase alpha chain family. In terms of assembly, in plastids the minimal PEP RNA polymerase catalytic core is composed of four subunits: alpha, beta, beta', and beta''. When a (nuclear-encoded) sigma factor is associated with the core the holoenzyme is formed, which can initiate transcription.

The protein localises to the plastid. Its subcellular location is the chloroplast. It carries out the reaction RNA(n) + a ribonucleoside 5'-triphosphate = RNA(n+1) + diphosphate. In terms of biological role, DNA-dependent RNA polymerase catalyzes the transcription of DNA into RNA using the four ribonucleoside triphosphates as substrates. The protein is DNA-directed RNA polymerase subunit alpha of Coffea arabica (Arabian coffee).